The sequence spans 148 residues: MVKATSVKDVDQHEIVQHIAKFLKKSGKVKVPEWSDVTKMGISKELAPLNSDWYYVRTASIARRLYVRSPTGVDALRLVYGGSKRRGVVPNHFAKASGSVIRKALQTLEAIKWVQKHPDGNGRVLTKQGRKDLDRIASQMRQNDRFTA.

This sequence belongs to the eukaryotic ribosomal protein eS19 family.

In terms of biological role, elimination of the ALEP-1 gene from all somatic cells in its fully activate state may represent an alternative way to gene regulation. The protein is Small ribosomal subunit protein eS19G (RPS19G) of Ascaris suum (Pig roundworm).